We begin with the raw amino-acid sequence, 388 residues long: Bifunctional enzyme IspD/IspF (388 aa).

A 2-C-methyl-D-erythritol 4-phosphate cytidylyltransferase region spans residues 1–228 (MRIAALLLAA…GVIDRNLLPR (228 aa)). The segment at 228 to 388 (RVGLGYDVHA…SIMVPDNGEA (161 aa)) is 2-C-methyl-D-erythritol 2,4-cyclodiphosphate synthase. Asp-234 and His-236 together coordinate a divalent metal cation. 4-CDP-2-C-methyl-D-erythritol 2-phosphate is bound by residues 234 to 236 (DVH) and 260 to 261 (HS). His-268 contributes to the a divalent metal cation binding site. Residues 282–284 (DIG), 358–361 (TTSE), Phe-365, and Arg-368 contribute to the 4-CDP-2-C-methyl-D-erythritol 2-phosphate site.

The protein in the N-terminal section; belongs to the IspD/TarI cytidylyltransferase family. IspD subfamily. This sequence in the C-terminal section; belongs to the IspF family. Requires a divalent metal cation as cofactor.

The catalysed reaction is 2-C-methyl-D-erythritol 4-phosphate + CTP + H(+) = 4-CDP-2-C-methyl-D-erythritol + diphosphate. It catalyses the reaction 4-CDP-2-C-methyl-D-erythritol 2-phosphate = 2-C-methyl-D-erythritol 2,4-cyclic diphosphate + CMP. It participates in isoprenoid biosynthesis; isopentenyl diphosphate biosynthesis via DXP pathway; isopentenyl diphosphate from 1-deoxy-D-xylulose 5-phosphate: step 2/6. The protein operates within isoprenoid biosynthesis; isopentenyl diphosphate biosynthesis via DXP pathway; isopentenyl diphosphate from 1-deoxy-D-xylulose 5-phosphate: step 4/6. Bifunctional enzyme that catalyzes the formation of 4-diphosphocytidyl-2-C-methyl-D-erythritol from CTP and 2-C-methyl-D-erythritol 4-phosphate (MEP) (IspD), and catalyzes the conversion of 4-diphosphocytidyl-2-C-methyl-D-erythritol 2-phosphate (CDP-ME2P) to 2-C-methyl-D-erythritol 2,4-cyclodiphosphate (ME-CPP) with a corresponding release of cytidine 5-monophosphate (CMP) (IspF). This Gluconobacter oxydans (strain 621H) (Gluconobacter suboxydans) protein is Bifunctional enzyme IspD/IspF.